A 462-amino-acid chain; its full sequence is CUGBP Elav-like family member 3-B (462 aa).

RRM domains are found at residues 7–88 (IKLF…PADS), 95–175 (RKLF…FADT), and 377–455 (CNIF…LKRP).

It belongs to the CELF/BRUNOL family.

Its subcellular location is the nucleus. The protein resides in the cytoplasm. RNA-binding protein that may be involved in the regulation of pre-mRNA alternative splicing. The protein is CUGBP Elav-like family member 3-B (tnrc4-b) of Xenopus laevis (African clawed frog).